The chain runs to 205 residues: Tegument protein UL51 homolog (205 aa).

The S-palmitoyl cysteine; by host moiety is linked to residue Cys-4.

This sequence belongs to the herpesviridae UL51 family. In terms of assembly, oligomerizes. Interacts with U75; this interaction mediates U75 incorporation to virions. Phosphorylated. In terms of processing, palmitoylation is necessary for Golgi localization.

It is found in the virion tegument. The protein localises to the host cytoplasm. The protein resides in the host Golgi apparatus. In terms of biological role, plays several roles during the time course of infection, including egress of virus particles from the perinuclear space and secondary envelopment of cytoplasmic capsids that bud into specific trans-Golgi network (TGN)-derived membranes. This is Tegument protein UL51 homolog (U44) from Homo sapiens (Human).